We begin with the raw amino-acid sequence, 60 residues long: Large ribosomal subunit protein bL32 (60 aa).

The tract at residues 1–60 (MAVQQNKKSRSARDMRRSHDALEASTLSVEKSTGEVHLRHHVSPEGVYRGRKVIDKGADE) is disordered. Basic and acidic residues predominate over residues 11–22 (SARDMRRSHDAL).

It belongs to the bacterial ribosomal protein bL32 family.

The protein is Large ribosomal subunit protein bL32 of Ectopseudomonas mendocina (strain ymp) (Pseudomonas mendocina).